The sequence spans 81 residues: uncharacterized protein (81 aa).

The segment at 55 to 81 (LDKRNSNNKIEKSENTGENHDNNQDQK) is disordered.

This is an uncharacterized protein from Thermoproteus tenax virus 1 (strain KRA1) (TTV1).